A 109-amino-acid polypeptide reads, in one-letter code: T-cell surface glycoprotein CD1b (109 aa).

An N-terminal signal peptide occupies residues Met1 to Asn18. N-linked (GlcNAc...) asparagine glycosylation is found at Asn38 and Asn75.

In terms of assembly, heterodimer with B2M (beta-2-microglobulin). Interacts with saposin C. As to expression, expressed on cortical thymocytes, on certain T-cell leukemias, and in various other tissues.

Its subcellular location is the cell membrane. The protein resides in the endosome membrane. It is found in the lysosome membrane. Antigen-presenting protein that binds self and non-self lipid and glycolipid antigens and presents them to T-cell receptors on natural killer T-cells. The protein is T-cell surface glycoprotein CD1b (CD1B) of Oryctolagus cuniculus (Rabbit).